The following is an 892-amino-acid chain: Alpha-actinin-1 (892 aa).

Met1 bears the N-acetylmethionine mark. Residues 1–247 (MDHYDSQQTN…IMTYVSSFYH (247 aa)) are actin-binding. A Phosphoserine modification is found at Ser6. The residue at position 12 (Tyr12) is a Phosphotyrosine; by FAK1. 2 consecutive Calponin-homology (CH) domains span residues 31–135 (KQQR…LRFA) and 144–250 (TSAK…HAFS). N6-acetyllysine is present on residues Lys95 and Lys195. 4 Spectrin repeats span residues 274–384 (QLME…WLLN), 394–499 (HLAE…ALER), 509–620 (QLYL…ALTE), and 630–733 (RLRK…EVEN). The interval 274-733 (QLMEDYEKLA…IARTINEVEN (460 aa)) is interaction with DDN. The residue at position 471 (Ser471) is a Phosphoserine. An N6-acetyllysine modification is found at Lys676. Ser677 carries the phosphoserine modification. 2 consecutive EF-hand domains span residues 746 to 781 (EQMNEFRASFNHFDRDHSGTLGPEEFKACLISLGYD) and 787 to 822 (QGEAEFARIMSIVDPNRLGVVTFQAFIDFMSRETAD). Ca(2+) is bound by residues Asp759, Asp761, Ser763, Thr765, and Glu770. Ser890 carries the post-translational modification Phosphoserine.

The protein belongs to the alpha-actinin family. As to quaternary structure, homodimer; antiparallel. Interacts with MYOZ2, TTID and LPP. Interacts with DDN. Interacts with PSD. Interacts with MICALL2. Interacts with DNM2 and CTTN. Interacts with PDLIM1. Interacts with PDLIM2. Interacts with PDLIM4 (via PDZ domain). Interacts with IGSF8.

The protein localises to the cytoplasm. Its subcellular location is the cytoskeleton. It is found in the myofibril. It localises to the sarcomere. The protein resides in the z line. The protein localises to the cell membrane. Its subcellular location is the cell junction. It is found in the cell projection. It localises to the ruffle. In terms of biological role, F-actin cross-linking protein which is thought to anchor actin to a variety of intracellular structures. Association with IGSF8 regulates the immune synapse formation and is required for efficient T-cell activation. The chain is Alpha-actinin-1 (ACTN1) from Homo sapiens (Human).